A 312-amino-acid polypeptide reads, in one-letter code: Cytochrome f (312 aa).

A signal peptide spans 1 to 28 (MQISKFFKFVFISVSLCGSLLFPQMANA). Residues tyrosine 29, cysteine 49, cysteine 52, and histidine 53 each contribute to the heme site. Residues 278–298 (VKGMIAFFFTVTVAQILLVLK) traverse the membrane as a helical segment.

The protein belongs to the cytochrome f family. In terms of assembly, the 4 large subunits of the cytochrome b6-f complex are cytochrome b6, subunit IV (17 kDa polypeptide, petD), cytochrome f and the Rieske protein, while the 4 small subunits are PetG, PetL, PetM and PetN. The complex functions as a dimer. Requires heme as cofactor.

The protein localises to the plastid. It localises to the chloroplast thylakoid membrane. Its function is as follows. Component of the cytochrome b6-f complex, which mediates electron transfer between photosystem II (PSII) and photosystem I (PSI), cyclic electron flow around PSI, and state transitions. This chain is Cytochrome f, found in Emiliania huxleyi (Coccolithophore).